Consider the following 91-residue polypeptide: Small ribosomal subunit protein bS16c (91 aa).

This sequence belongs to the bacterial ribosomal protein bS16 family.

It is found in the plastid. It localises to the chloroplast. This chain is Small ribosomal subunit protein bS16c, found in Pelargonium hortorum (Common geranium).